We begin with the raw amino-acid sequence, 554 residues long: Wee1-like protein kinase 2-C (554 aa).

Disordered stretches follow at residues 1-86 (MRTA…GGEC) and 145-183 (TLVN…SQMK). 2 stretches are compositionally biased toward polar residues: residues 38–48 (SPVSSWRTNNC) and 147–163 (VNVN…THFQ). The 275-residue stretch at 213–487 (FLEIEKIGAG…AKNSVLRRCV (275 aa)) folds into the Protein kinase domain. ATP-binding positions include 219 to 227 (IGAGEFGSV) and Lys-242. Asp-340 serves as the catalytic Proton acceptor. Asn-345 and Asp-377 together coordinate Mg(2+). Residues 490 to 516 (AAELQKQLNVEKFKTAMLERELQAAKL) are a coiled coil.

It belongs to the protein kinase superfamily. Ser/Thr protein kinase family. WEE1 subfamily.

The protein localises to the nucleus. It catalyses the reaction L-tyrosyl-[protein] + ATP = O-phospho-L-tyrosyl-[protein] + ADP + H(+). Protein tyrosine kinase that phosphorylates and inhibits cdk1 and acts as a regulator of meiosis in oocytes. Required to ensure the meiotic cell cycle in oocytes by phosphorylating cdk1 at 'Tyr-15', leading to inhibit cdk1 activity and prevent meiosis. The chain is Wee1-like protein kinase 2-C (wee2-c) from Xenopus laevis (African clawed frog).